Reading from the N-terminus, the 303-residue chain is Probable 5-dehydro-4-deoxyglucarate dehydratase (303 aa).

This sequence belongs to the DapA family.

It catalyses the reaction 5-dehydro-4-deoxy-D-glucarate + H(+) = 2,5-dioxopentanoate + CO2 + H2O. Its pathway is carbohydrate acid metabolism; D-glucarate degradation; 2,5-dioxopentanoate from D-glucarate: step 2/2. This is Probable 5-dehydro-4-deoxyglucarate dehydratase from Acinetobacter baumannii (strain SDF).